Reading from the N-terminus, the 31-residue chain is Cytochrome b6-f complex subunit 6 (31 aa).

A helical transmembrane segment spans residues 3–23 (TIISYFGFLLASIIFTLILFI).

This sequence belongs to the PetL family. The 4 large subunits of the cytochrome b6-f complex are cytochrome b6, subunit IV (17 kDa polypeptide, PetD), cytochrome f and the Rieske protein, while the 4 small subunits are PetG, PetL, PetM and PetN. The complex functions as a dimer.

Its subcellular location is the plastid. The protein resides in the chloroplast thylakoid membrane. Its function is as follows. Component of the cytochrome b6-f complex, which mediates electron transfer between photosystem II (PSII) and photosystem I (PSI), cyclic electron flow around PSI, and state transitions. PetL is important for photoautotrophic growth as well as for electron transfer efficiency and stability of the cytochrome b6-f complex. The protein is Cytochrome b6-f complex subunit 6 of Abies homolepis (Nikko fir).